Reading from the N-terminus, the 68-residue chain is Conotoxin tx3b (68 aa).

Positions 1-19 (MSKLGALLTICLLLFSLTA) are cleaved as a signal peptide. Positions 20–52 (VPLDGDQHADQPAQRLQDRIPTEDHPLFDPNKR) are excised as a propeptide. Disulfide bonds link Cys-53–Cys-67, Cys-54–Cys-63, and Cys-59–Cys-66. At Met-61 the chain carries Methionine sulfoxide; partial. Cys-67 bears the Cysteine amide mark.

As to expression, expressed by the venom duct.

It localises to the secreted. Its function is as follows. Intracranial injection into mice causes scratching, hyperactivity and circular motion. This is Conotoxin tx3b from Conus textile (Cloth-of-gold cone).